A 907-amino-acid chain; its full sequence is DNA (cytosine-5)-methyltransferase CMT3 (907 aa).

Positions 1–15 (MAPSSPSSAAAPTRT) are enriched in low complexity. The tract at residues 1 to 154 (MAPSSPSSAA…RNAATRRPDE (154 aa)) is disordered. The segment covering 30–63 (ATDEPSTKRTRRPKAETKPRKKKDEVKEEEKPPM) has biased composition (basic and acidic residues). Residues 64–89 (EDDACGEEPDAEEMALGEEAEAEEAE) are compositionally biased toward acidic residues. 2 stretches are compositionally biased toward basic and acidic residues: residues 115–124 (HGSDGDHDPE) and 131–140 (PAKEARDKWP). The region spanning 172 to 297 (TLYCLHDDVY…VAYSTFANIP (126 aa)) is the BAH domain. Positions 303–323 (SGSDTASDISSDDVDSSKGKV) are disordered. Positions 335 to 868 (ATLLDLYSGC…YSLGLAYQRE (534 aa)) constitute an SAM-dependent MTase C5-type domain. The 64-residue stretch at 437-500 (FVVEKLAGIC…EGYRRKILPL (64 aa)) folds into the Chromo domain. C513 is an active-site residue.

This sequence belongs to the class I-like SAM-binding methyltransferase superfamily. C5-methyltransferase family.

The protein localises to the nucleus. It catalyses the reaction a 2'-deoxycytidine in DNA + S-adenosyl-L-methionine = a 5-methyl-2'-deoxycytidine in DNA + S-adenosyl-L-homocysteine + H(+). Functionally, involved in CpXpG DNA methylation. Plays a critical role in the maintenance of CpXpG DNA methylation and suppression of a wide spectrum of transposable element (TE) activities. Required for proper plant development in reproductive stage. The sequence is that of DNA (cytosine-5)-methyltransferase CMT3 from Oryza sativa subsp. japonica (Rice).